A 963-amino-acid polypeptide reads, in one-letter code: Translation initiation factor IF-2 (963 aa).

The segment covering 53–77 has biased composition (basic and acidic residues); sequence SHGQADDSARKKITLTKRETSEIRQ. Residues 53–377 are disordered; sequence SHGQADDSAR…RSNFQAPTEP (325 aa). Positions 78–87 are enriched in polar residues; that stretch reads SDATGKTRTV. Composition is skewed to basic and acidic residues over residues 98-110, 123-183, 197-250, and 267-278; these read IKRD…HQAD, EEAR…KAEE, DTSR…EAEA, and PSERKAEEKKAE. Over residues 343-356 the composition is skewed to gly residues; sequence SSGGVGGWRGGPRG. One can recognise a tr-type G domain in the interval 463-632; sequence PRPPVVTVMG…SLQAEVLELK (170 aa). The G1 stretch occupies residues 472 to 479; it reads GHVDHGKT. Residue 472-479 participates in GTP binding; sequence GHVDHGKT. The segment at 497–501 is G2; that stretch reads GITQH. The tract at residues 518–521 is G3; the sequence is DTPG. GTP-binding positions include 518 to 522 and 572 to 575; these read DTPGH and NKVD. Positions 572 to 575 are G4; it reads NKVD. Residues 608-610 form a G5 region; the sequence is SAK.

It belongs to the TRAFAC class translation factor GTPase superfamily. Classic translation factor GTPase family. IF-2 subfamily.

Its subcellular location is the cytoplasm. Its function is as follows. One of the essential components for the initiation of protein synthesis. Protects formylmethionyl-tRNA from spontaneous hydrolysis and promotes its binding to the 30S ribosomal subunits. Also involved in the hydrolysis of GTP during the formation of the 70S ribosomal complex. In Cupriavidus taiwanensis (strain DSM 17343 / BCRC 17206 / CCUG 44338 / CIP 107171 / LMG 19424 / R1) (Ralstonia taiwanensis (strain LMG 19424)), this protein is Translation initiation factor IF-2.